The following is an 891-amino-acid chain: Valine--tRNA ligase (891 aa).

The 'HIGH' region signature appears at 43–53 (PFTSGTLHLGH). A 'KMSKS' region motif is present at residues 536–540 (KMSKS). Lys-539 contributes to the ATP binding site.

Belongs to the class-I aminoacyl-tRNA synthetase family. ValS type 2 subfamily.

It is found in the cytoplasm. The catalysed reaction is tRNA(Val) + L-valine + ATP = L-valyl-tRNA(Val) + AMP + diphosphate. Its function is as follows. Catalyzes the attachment of valine to tRNA(Val). As ValRS can inadvertently accommodate and process structurally similar amino acids such as threonine, to avoid such errors, it has a 'posttransfer' editing activity that hydrolyzes mischarged Thr-tRNA(Val) in a tRNA-dependent manner. The protein is Valine--tRNA ligase of Pyrococcus furiosus (strain ATCC 43587 / DSM 3638 / JCM 8422 / Vc1).